Reading from the N-terminus, the 92-residue chain is Acylphosphatase (92 aa).

The 88-residue stretch at 5–92 (QVQLFVRGRV…GDFFDFRITD (88 aa)) folds into the Acylphosphatase-like domain. Catalysis depends on residues R20 and N38.

Belongs to the acylphosphatase family.

The enzyme catalyses an acyl phosphate + H2O = a carboxylate + phosphate + H(+). The chain is Acylphosphatase (acyP) from Sorangium cellulosum (strain So ce56) (Polyangium cellulosum (strain So ce56)).